Here is a 339-residue protein sequence, read N- to C-terminus: uncharacterized protein (339 aa).

NADP(+)-binding residues include Ile54, Lys78, Asp101, Asn128, Tyr213, and Lys217. Tyr213 functions as the Proton donor in the catalytic mechanism. Catalysis depends on Lys217, which acts as the Lowers pKa of active site Tyr.

The protein belongs to the short-chain dehydrogenases/reductases (SDR) family.

This is an uncharacterized protein from Schizosaccharomyces pombe (strain 972 / ATCC 24843) (Fission yeast).